We begin with the raw amino-acid sequence, 51 residues long: UPF0181 protein HAPS_0710 (51 aa).

It belongs to the UPF0181 family.

The protein is UPF0181 protein HAPS_0710 of Glaesserella parasuis serovar 5 (strain SH0165) (Haemophilus parasuis).